A 421-amino-acid chain; its full sequence is Trimethyllysine dioxygenase, mitochondrial (421 aa).

The N-terminal 15 residues, 1-15, are a transit peptide targeting the mitochondrion; the sequence is MWYHKLLHQQSRLQN. Lysine 179 and lysine 236 each carry N6-acetyllysine. 3 residues coordinate Fe cation: histidine 242, aspartate 244, and histidine 389.

This sequence belongs to the gamma-BBH/TMLD family. As to quaternary structure, homodimer. Fe(2+) is required as a cofactor. The cofactor is L-ascorbate.

The protein resides in the mitochondrion matrix. The catalysed reaction is N(6),N(6),N(6)-trimethyl-L-lysine + 2-oxoglutarate + O2 = (3S)-3-hydroxy-N(6),N(6),N(6)-trimethyl-L-lysine + succinate + CO2. Its pathway is amine and polyamine biosynthesis; carnitine biosynthesis. Converts trimethyllysine (TML) into hydroxytrimethyllysine (HTML). In Rattus norvegicus (Rat), this protein is Trimethyllysine dioxygenase, mitochondrial (Tmlhe).